The following is a 201-amino-acid chain: MAQINVIGKNGGRTIDLELPEVNAAILHDVVTWQLASRRRGTASTKTRAQVSKSGKKMYSQKGTGNARHGDRGVPTFVGGGVAFGPKPRSYGYTLPRKVRQLGLAMALADRQDGGKLIAVDGFDLDGKTKSFVSWAAQNGLDGSERVLIVTDDAQTRQSARNVAWATVLPVAGLNAYDILRHDRLVIDAVALEPAQEEVEQ.

Positions 39-72 are disordered; the sequence is RRGTASTKTRAQVSKSGKKMYSQKGTGNARHGDR. Over residues 42 to 53 the composition is skewed to polar residues; that stretch reads TASTKTRAQVSK.

It belongs to the universal ribosomal protein uL4 family. As to quaternary structure, part of the 50S ribosomal subunit.

One of the primary rRNA binding proteins, this protein initially binds near the 5'-end of the 23S rRNA. It is important during the early stages of 50S assembly. It makes multiple contacts with different domains of the 23S rRNA in the assembled 50S subunit and ribosome. In terms of biological role, forms part of the polypeptide exit tunnel. This chain is Large ribosomal subunit protein uL4, found in Deinococcus deserti (strain DSM 17065 / CIP 109153 / LMG 22923 / VCD115).